Here is a 368-residue protein sequence, read N- to C-terminus: sn-1 linoleoyl-lipid 6-desaturase (368 aa).

The next 2 helical transmembrane spans lie at 47–67 (IILA…DVLW) and 68–88 (MKLL…FNIS). A Histidine box-1 motif is present at residues 89-93 (HDGNH). The Histidine box-2 signature appears at 124–129 (HNVLHH). 3 helical membrane passes run 164-184 (WFIW…DVQT), 204-224 (IATL…IPIA), and 233-253 (VIGA…VFML). The Histidine box-3 signature appears at 305–309 (HHLFP).

This sequence belongs to the fatty acid desaturase type 2 family. The cofactor is Fe(2+).

The protein localises to the cell inner membrane. The protein resides in the cellular thylakoid membrane. The enzyme catalyses a 1-[(9Z,12Z)-octadecdienoyl]-2-acyl-glycerolipid + 2 reduced [2Fe-2S]-[ferredoxin] + O2 + 2 H(+) = a 1-[(6Z,9Z,12Z)-octadectrienoyl]-2-acyl-glycerolipid + 2 oxidized [2Fe-2S]-[ferredoxin] + 2 H2O. It functions in the pathway lipid metabolism; polyunsaturated fatty acid biosynthesis. Activity requires ferredoxin, which is the natural electron donor, or cytochrome b5. In addition, activity is increased in the presence of the intermediate electron donors, NADPH and FADH(2). Desaturase involved in fatty acid biosynthesis. Introduces a double bond at carbon 6 of linoleoyl group (18:2) attached to the sn-1 position of the glycerol moiety of membrane glycerolipids, leading to the formation of gamma-linolenic acid (GLA). This Arthrospira platensis (Spirulina platensis) protein is sn-1 linoleoyl-lipid 6-desaturase.